The following is a 273-amino-acid chain: MEILPILSDSYTLGFIGAGKMAESIAKGASRSGVLPSSRIVTAHSNPSRRAAFESIGITVLSSNDDVVRASNVVVFSVKPQLVKDVVLKLKPLLTKDKLLVSVAAGIKLKDLQEWAGHERFIRVMPNTPAAVGQAASVMSLGGAATEEDANLISQLFGSIGKIWKADDKFFDAITGLSGSGPAYIYLAIEALADGGVAAGLPRDLALSLASQTVLGAASMATLSGKHPGQLKDDVTSPGGTTIAGVHELEKGGFRGTLMNAVVAAAKRSRELS.

The protein belongs to the pyrroline-5-carboxylate reductase family.

Its subcellular location is the cytoplasm. It carries out the reaction L-proline + NADP(+) = (S)-1-pyrroline-5-carboxylate + NADPH + 2 H(+). The enzyme catalyses L-proline + NAD(+) = (S)-1-pyrroline-5-carboxylate + NADH + 2 H(+). It participates in amino-acid biosynthesis; L-proline biosynthesis; L-proline from L-glutamate 5-semialdehyde: step 1/1. The chain is Pyrroline-5-carboxylate reductase (PROC) from Pisum sativum (Garden pea).